The sequence spans 156 residues: Small ribosomal subunit protein uS7 (156 aa).

It belongs to the universal ribosomal protein uS7 family. As to quaternary structure, part of the 30S ribosomal subunit. Contacts proteins S9 and S11.

Functionally, one of the primary rRNA binding proteins, it binds directly to 16S rRNA where it nucleates assembly of the head domain of the 30S subunit. Is located at the subunit interface close to the decoding center, probably blocks exit of the E-site tRNA. The polypeptide is Small ribosomal subunit protein uS7 (Cupriavidus metallidurans (strain ATCC 43123 / DSM 2839 / NBRC 102507 / CH34) (Ralstonia metallidurans)).